The following is a 451-amino-acid chain: MVSRDQAHLGPKYVGLWDFKSRTDEELSFRAGDVFHVARKEEQWWWATLLDEAGGAVAQGYVPHNYLAERETVESEPWFFGCISRSEAVRRLQAEGNATGAFLIRVSEKPSADYVLSVRDTQAVRHYKIWRRAGGRLHLNEAVSFLSLPELVNYHRAQSLSHGLRLAAPCRKHEPEPLPHWDDWERPREEFTLCRKLGSGYFGEVFEGLWKDRVQVAIKVISRDNLLHQQMLQSEIQAMKKLRHKHILALYAVVSVGDPVYIITELMAKGSLLELLRDSDEKVLPVSELLDIAWQVAEGMCYLESQNYIHRDLAARNILVGENTLCKVGDFGLARLIKEDVYLSHDHNIPYKWTAPEALSRGHYSTKSDVWSFGILLHEMFSRGQVPYPGMSNHEAFLRVDAGYRMPCPLECPPSVHKLMLTCWCRDPEQRPCFKALRERLSSFTSYENPT.

In terms of domain architecture, SH3 spans 8–72 (HLGPKYVGLW…PHNYLAERET (65 aa)). Phosphotyrosine; by autocatalysis is present on residues Tyr13, Tyr61, Tyr66, and Tyr114. One can recognise an SH2 domain in the interval 78 to 170 (WFFGCISRSE…SHGLRLAAPC (93 aa)). The segment at 171–190 (RKHEPEPLPHWDDWERPREE) is linker. A Protein kinase domain is found at 191 to 445 (FTLCRKLGSG…ALRERLSSFT (255 aa)). Residues 197–205 (LGSGYFGEV) and Lys219 each bind ATP. The active-site Proton acceptor is the Asp312. Phosphotyrosine; by autocatalysis is present on residues Tyr342 and Tyr351. Tyr447 carries the post-translational modification Phosphotyrosine.

Belongs to the protein kinase superfamily. Tyr protein kinase family. BRK/PTK6/SIK subfamily. In terms of assembly, interacts with GAP-A.p65. Interacts (via SH3 and SH2 domains) with KHDRBS1. Interacts (via SH3 and SH2 domains) with phosphorylated IRS4. Interacts with ADAM15. Interacts (via SH3 domain) with SFPQ. Interacts with EGFR and ERBB2. Interacts with STAP2. Interacts with PNX. Interacts with SFPQ. Interacts with PTK/ATK. Interacts with CTNNB1. Post-translationally, autophosphorylated. Autophosphorylation of Tyr-342 leads to an increase of kinase activity. Tyr-447 binds to the SH2 domain when phosphorylated and negatively regulates kinase activity. As to expression, epithelia-specific. Very high level in colon and high levels in small intestine and prostate, and low levels in some fetal tissues. Not expressed in breast or ovarian tissue but expressed in high percentage of breast and ovarian cancers. Also overexpressed in some metastatic melanomas, lymphomas, colon cancers, squamous cell carcinomas and prostate cancers. Also found in melanocytes. Not expressed in heart, brain, placenta, lung, liver, skeletal muscle, kidney and pancreas. Isoform 2 is present in prostate epithelial cell lines derived from normal prostate and prostate adenocarcinomas, as well as in a variety of cell lines.

It is found in the cytoplasm. Its subcellular location is the nucleus. The protein resides in the cell projection. The protein localises to the ruffle. It localises to the membrane. It carries out the reaction L-tyrosyl-[protein] + ATP = O-phospho-L-tyrosyl-[protein] + ADP + H(+). With respect to regulation, activated by EGF, NRG1 and IGF1. Inhibited by SOCS3 to phosphorylate STAT3. Stabilized in the inactive form by an association between the SH3 domain and the SH2-TK linker region. Interaction between Trp-184 within SH2-TK linker region and the catalytic domain appears essential for positive regulation of kinase activity. Non-receptor tyrosine-protein kinase implicated in the regulation of a variety of signaling pathways that control the differentiation and maintenance of normal epithelia, as well as tumor growth. Function seems to be context dependent and differ depending on cell type, as well as its intracellular localization. A number of potential nuclear and cytoplasmic substrates have been identified. These include the RNA-binding proteins: KHDRBS1/SAM68, KHDRBS2/SLM1, KHDRBS3/SLM2 and SFPQ/PSF; transcription factors: STAT3 and STAT5A/B and a variety of signaling molecules: ARHGAP35/p190RhoGAP, PXN/paxillin, BTK/ATK, STAP2/BKS. Phosphorylates the GTPase-activating protein ARAP1 following EGF stimulation which enhances EGFR signaling by delaying EGFR down-regulation. Also associates with a variety of proteins that are likely upstream of PTK6 in various signaling pathways, or for which PTK6 may play an adapter-like role. These proteins include ADAM15, EGFR, ERBB2, ERBB3 and IRS4. In normal or non-tumorigenic tissues, PTK6 promotes cellular differentiation and apoptosis. In tumors PTK6 contributes to cancer progression by sensitizing cells to mitogenic signals and enhancing proliferation, anchorage-independent survival and migration/invasion. Association with EGFR, ERBB2, ERBB3 may contribute to mammary tumor development and growth through enhancement of EGF-induced signaling via BTK/AKT and PI3 kinase. Contributes to migration and proliferation by contributing to EGF-mediated phosphorylation of ARHGAP35/p190RhoGAP, which promotes association with RASA1/p120RasGAP, inactivating RhoA while activating RAS. EGF stimulation resulted in phosphorylation of PNX/Paxillin by PTK6 and activation of RAC1 via CRK/CrKII, thereby promoting migration and invasion. PTK6 activates STAT3 and STAT5B to promote proliferation. Nuclear PTK6 may be important for regulating growth in normal epithelia, while cytoplasmic PTK6 might activate oncogenic signaling pathways. In terms of biological role, inhibits PTK6 phosphorylation and PTK6 association with other tyrosine-phosphorylated proteins. The protein is Protein-tyrosine kinase 6 (PTK6) of Homo sapiens (Human).